Reading from the N-terminus, the 232-residue chain is Fibrillarin-like rRNA/tRNA 2'-O-methyltransferase (232 aa).

Residues 89–90 (TT), 108–109 (EF), 133–134 (DA), and 153–156 (DIAQ) contribute to the S-adenosyl-L-methionine site.

It belongs to the methyltransferase superfamily. Fibrillarin family. In terms of assembly, interacts with nop5. Component of box C/D small ribonucleoprotein (sRNP) particles that contain rpl7ae, FlpA and nop5, plus a guide RNA.

In terms of biological role, involved in pre-rRNA and tRNA processing. Utilizes the methyl donor S-adenosyl-L-methionine to catalyze the site-specific 2'-hydroxyl methylation of ribose moieties in rRNA and tRNA. Site specificity is provided by a guide RNA that base pairs with the substrate. Methylation occurs at a characteristic distance from the sequence involved in base pairing with the guide RNA. The polypeptide is Fibrillarin-like rRNA/tRNA 2'-O-methyltransferase (Saccharolobus islandicus (strain L.S.2.15 / Lassen #1) (Sulfolobus islandicus)).